The sequence spans 707 residues: Caprin-1 (707 aa).

2 stretches are compositionally biased toward low complexity: residues 1–15 and 22–43; these read MPSA…SKSS and GSSG…PATG. The segment at 1-48 is disordered; that stretch reads MPSATSHSGSGSKSSGPPPPSGSSGSEAAAGAAAPASQHPATGTGAVQ. The residue at position 2 (proline 2) is an N-acetylproline. Phosphoserine is present on serine 10. Residues 58-92 are a coiled coil; it reads VIDKKLRNLEKKKGKLDDYQERMNKGERLNQDQLD. Serine 113 carries the phosphoserine modification. Positions 123–151 form a coiled coil; it reads KTIKKTARREQLMREEAEQKRLKTVLELQ. Arginine 163 carries the post-translational modification Omega-N-methylarginine. The tract at residues 325 to 347 is disordered; sequence LQQQPQAASPSVPEPHSLTPVAQ. The span at 326-335 shows a compositional bias: low complexity; sequence QQQPQAASPS. Phosphoserine is present on residues serine 333 and serine 341. Residues 358–379 form a G3BP1-binding region; it reads QDLMAQMQGPYNFIQDSMLDFE. 3 disordered regions span residues 412 to 443, 523 to 558, and 570 to 620; these read ESRL…YTAS, PVPP…EQTE, and TYHG…RGLM. A compositionally biased stretch (polar residues) spans 431 to 443; that stretch reads PLVSSTSEGYTAS. Residues 535–558 are compositionally biased toward low complexity; it reads QQSQYQASYNQSFSSQPHQVEQTE. Residues 572–603 are compositionally biased toward polar residues; sequence HGSQDQPHQVPGNHQQPPQQSTGFPRSSQPYY. At tyrosine 623 the chain carries Phosphotyrosine. Arginine 624 and arginine 631 each carry omega-N-methylarginine. Phosphotyrosine occurs at positions 634 and 637. The residue at position 638 (arginine 638) is an Omega-N-methylarginine. Over residues 641–655 the composition is skewed to polar residues; that stretch reads FSNTPNSGYTQSQFN. The tract at residues 641 to 707 is disordered; the sequence is FSNTPNSGYT…MPQMNTQQVN (67 aa). 2 O-linked (GlcNAc) serine glycosylation sites follow: serine 642 and serine 647. Phosphotyrosine is present on residues tyrosine 649, tyrosine 660, tyrosine 663, and tyrosine 668. 2 stretches are compositionally biased toward low complexity: residues 674 to 684 and 695 to 707; these read RGSGQSGPRGA and NRGM…QQVN. Arginine 696 is modified (asymmetric dimethylarginine; alternate). The residue at position 696 (arginine 696) is an Omega-N-methylarginine; alternate.

The protein belongs to the caprin family. As to quaternary structure, may form homomultimers. Interacts with G3BP1; interaction is direct and promotes stress granule formation. Interacts with G3BP2; interaction is direct and promotes stress granule formation. Interacts with PQBP1. Interacts with DDX3X. Interacts (when phosphorylated by EPHA4) with FMR1; interaction with FMR1 promotes formation of a membraneless compartment. Post-translationally, tyrosine phosphorylation by EPHA4 promotes interaction with FMR1 and liquid-liquid phase separation (LLPS) for the formation of a membraneless compartment that concentrates mRNAs with associated regulatory factors. O-glycosylated (O-GlcNAcylated), in a cell cycle-dependent manner. O-glycosylation by OGT inhibit ability to undergo liquid-liquid phase separation (LLPS). Expressed in hippocampal and neocortical pyramidal neurons, but not in Purkinje cells.

Its subcellular location is the cytoplasm. The protein localises to the cytoplasmic ribonucleoprotein granule. It localises to the cytosol. The protein resides in the cell projection. It is found in the dendrite. Its subcellular location is the lamellipodium. Its activity is regulated as follows. Ability to mediate liquid-liquid phase separation is regulated by ATP: moderate concentrations of ATP enhance phase separation, whereas high concentrations of ATP lead to inhibition of phase separation. Its function is as follows. mRNA-binding protein that acts as a regulator of mRNAs transport, translation and/or stability, and which is involved in neurogenesis, synaptic plasticity in neurons and cell proliferation and migration in multiple cell types. Plays an essential role in cytoplasmic stress granule formation. Acts as an mRNA regulator by mediating formation of some phase-separated membraneless compartment: undergoes liquid-liquid phase separation upon binding to target mRNAs, leading to assemble mRNAs into cytoplasmic ribonucleoprotein granules that concentrate mRNAs with associated regulatory factors. Undergoes liquid-liquid phase separation following phosphorylation and interaction with FMR1, promoting formation of cytoplasmic ribonucleoprotein granules that concentrate mRNAs with factors that inhibit translation and mediate deadenylation of target mRNAs. In these cytoplasmic ribonucleoprotein granules, CAPRIN1 mediates recruitment of CNOT7 deadenylase, leading to mRNA deadenylation and degradation. Binds directly and selectively to MYC and CCND2 mRNAs. In neuronal cells, directly binds to several mRNAs associated with RNA granules, including BDNF, CAMK2A, CREB1, MAP2, NTRK2 mRNAs, as well as to GRIN1 and KPNB1 mRNAs, but not to rRNAs. This Rattus norvegicus (Rat) protein is Caprin-1 (Caprin1).